Consider the following 554-residue polypeptide: Phosphomethylpyrimidine synthase (554 aa).

Substrate contacts are provided by residues Asn191, Met220, Tyr249, His285, 305-307 (SRG), 346-349 (DGLR), and Glu385. His389 serves as a coordination point for Zn(2+). Residue Tyr412 participates in substrate binding. His453 is a Zn(2+) binding site. [4Fe-4S] cluster contacts are provided by Cys533, Cys536, and Cys541.

It belongs to the ThiC family. Homodimer. It depends on [4Fe-4S] cluster as a cofactor.

The catalysed reaction is 5-amino-1-(5-phospho-beta-D-ribosyl)imidazole + S-adenosyl-L-methionine = 4-amino-2-methyl-5-(phosphooxymethyl)pyrimidine + CO + 5'-deoxyadenosine + formate + L-methionine + 3 H(+). The protein operates within cofactor biosynthesis; thiamine diphosphate biosynthesis. Its function is as follows. Catalyzes the synthesis of the hydroxymethylpyrimidine phosphate (HMP-P) moiety of thiamine from aminoimidazole ribotide (AIR) in a radical S-adenosyl-L-methionine (SAM)-dependent reaction. This chain is Phosphomethylpyrimidine synthase, found in Ehrlichia chaffeensis (strain ATCC CRL-10679 / Arkansas).